Reading from the N-terminus, the 583-residue chain is 2-succinyl-5-enolpyruvyl-6-hydroxy-3-cyclohexene-1-carboxylate synthase (583 aa).

Belongs to the TPP enzyme family. MenD subfamily. Homodimer. Requires Mg(2+) as cofactor. The cofactor is Mn(2+). It depends on thiamine diphosphate as a cofactor.

The catalysed reaction is isochorismate + 2-oxoglutarate + H(+) = 5-enolpyruvoyl-6-hydroxy-2-succinyl-cyclohex-3-ene-1-carboxylate + CO2. It participates in quinol/quinone metabolism; 1,4-dihydroxy-2-naphthoate biosynthesis; 1,4-dihydroxy-2-naphthoate from chorismate: step 2/7. It functions in the pathway quinol/quinone metabolism; menaquinone biosynthesis. Functionally, catalyzes the thiamine diphosphate-dependent decarboxylation of 2-oxoglutarate and the subsequent addition of the resulting succinic semialdehyde-thiamine pyrophosphate anion to isochorismate to yield 2-succinyl-5-enolpyruvyl-6-hydroxy-3-cyclohexene-1-carboxylate (SEPHCHC). The sequence is that of 2-succinyl-5-enolpyruvyl-6-hydroxy-3-cyclohexene-1-carboxylate synthase from Chlorobium phaeovibrioides (strain DSM 265 / 1930) (Prosthecochloris vibrioformis (strain DSM 265)).